We begin with the raw amino-acid sequence, 523 residues long: MSQQVIIFDTTLRDGEQALQASLSAKEKLQIALALERMGVDVMEVGFPVSSPGDFESVQTIARTIKNSRVCALARCVEKDIDVAAQALKVADAFRIHTFIATSPMHIATKLRSTLDEVIERAVYMVKRARNYTDDVEFSCEDAGRTPVDDLARVVEAAINAGARTINIPDTVGYTMPFEFAGIISGLYERVPNIDKAIISVHTHDDLGIAVGNSLAAVHAGARQVEGAMNGIGERAGNCALEEVIMAIKVRKDIINVHTNINHHEIWRTSQTVSQICNMPIPANKAIVGSGAFAHSSGIHQDGVLKNRENYEIMTPESIGLNQIQLNLTSRSGRAAVKHRMEEMGYKDTDYNMGHLYDAFLKLADKKGQVFDYDLEALAFINKQQEEPEHFRLDYFSVQSGSSDIATASVKLACGEEIKAEAANGNGPVDAIYQAINRITGYDVELVKYDLNAKGQGKDALGQVDIVVNHHGRRFHGVGLATDIVESSAKAMVHVLNNIWRAAEVEKELQRKAQNKENNKETV.

The 263-residue stretch at 5-267 (VIIFDTTLRD…HTNINHHEIW (263 aa)) folds into the Pyruvate carboxyltransferase domain. Residues aspartate 14, histidine 202, histidine 204, and asparagine 238 each contribute to the Mn(2+) site. The interval 392–523 (RLDYFSVQSG…QNKENNKETV (132 aa)) is regulatory domain.

This sequence belongs to the alpha-IPM synthase/homocitrate synthase family. LeuA type 1 subfamily. As to quaternary structure, homodimer. Mn(2+) is required as a cofactor.

Its subcellular location is the cytoplasm. The catalysed reaction is 3-methyl-2-oxobutanoate + acetyl-CoA + H2O = (2S)-2-isopropylmalate + CoA + H(+). Its pathway is amino-acid biosynthesis; L-leucine biosynthesis; L-leucine from 3-methyl-2-oxobutanoate: step 1/4. Catalyzes the condensation of the acetyl group of acetyl-CoA with 3-methyl-2-oxobutanoate (2-ketoisovalerate) to form 3-carboxy-3-hydroxy-4-methylpentanoate (2-isopropylmalate). The polypeptide is 2-isopropylmalate synthase (Salmonella typhi).